Here is a 642-residue protein sequence, read N- to C-terminus: Threonine--tRNA ligase (642 aa).

Residues 1-61 form the TGS domain; that stretch reads MPIITLPDGS…SEDANLEIIT (61 aa). Residues 243 to 534 form a catalytic region; it reads DHRKIGKALN…ITEEYAGFFP (292 aa). 3 residues coordinate Zn(2+): Cys334, His385, and His511.

The protein belongs to the class-II aminoacyl-tRNA synthetase family. Homodimer. Zn(2+) is required as a cofactor.

It localises to the cytoplasm. The catalysed reaction is tRNA(Thr) + L-threonine + ATP = L-threonyl-tRNA(Thr) + AMP + diphosphate + H(+). Catalyzes the attachment of threonine to tRNA(Thr) in a two-step reaction: L-threonine is first activated by ATP to form Thr-AMP and then transferred to the acceptor end of tRNA(Thr). Also edits incorrectly charged L-seryl-tRNA(Thr). The sequence is that of Threonine--tRNA ligase from Histophilus somni (strain 2336) (Haemophilus somnus).